The chain runs to 113 residues: Probable 4-amino-4-deoxy-L-arabinose-phosphoundecaprenol flippase subunit ArnE (113 aa).

The next 3 membrane-spanning stretches (helical) occupy residues 37–57, 62–82, and 91–111; these read SALK…LFWL, ILPL…VTLA, and AGIK…LMSL. One can recognise an EamA domain in the interval 45-111; it reads AVILLAVGML…IMLGILLMSL (67 aa).

This sequence belongs to the ArnE family. In terms of assembly, heterodimer of ArnE and ArnF.

The protein resides in the cell inner membrane. It participates in bacterial outer membrane biogenesis; lipopolysaccharide biosynthesis. Its function is as follows. Translocates 4-amino-4-deoxy-L-arabinose-phosphoundecaprenol (alpha-L-Ara4N-phosphoundecaprenol) from the cytoplasmic to the periplasmic side of the inner membrane. In Photorhabdus laumondii subsp. laumondii (strain DSM 15139 / CIP 105565 / TT01) (Photorhabdus luminescens subsp. laumondii), this protein is Probable 4-amino-4-deoxy-L-arabinose-phosphoundecaprenol flippase subunit ArnE.